We begin with the raw amino-acid sequence, 500 residues long: Glycogen synthase (500 aa).

Lys20 lines the ADP-alpha-D-glucose pocket.

This sequence belongs to the glycosyltransferase 1 family. Bacterial/plant glycogen synthase subfamily.

It catalyses the reaction [(1-&gt;4)-alpha-D-glucosyl](n) + ADP-alpha-D-glucose = [(1-&gt;4)-alpha-D-glucosyl](n+1) + ADP + H(+). Its pathway is glycan biosynthesis; glycogen biosynthesis. Functionally, synthesizes alpha-1,4-glucan chains using ADP-glucose. The chain is Glycogen synthase from Desulforudis audaxviator (strain MP104C).